The sequence spans 478 residues: Chromosomal replication initiator protein DnaA (478 aa).

Residues 1 to 95 form a domain I, interacts with DnaA modulators region; it reads MNKTLNPQEV…DVLEKEITEE (95 aa). Residues 96–141 are domain II; sequence INDLVQSMEEEDFALIDHTKPVIPNFFDQNTRVNFGGGPNNHHPTT. The segment at 142 to 358 is domain III, AAA+ region; that stretch reads GVNPRFTFDN…GALLRIFALA (217 aa). ATP-binding residues include Gly186, Gly188, Lys189, and Thr190. A domain IV, binds dsDNA region spans residues 359 to 478; that stretch reads SFNKEEINMT…YKLTQFILRR (120 aa).

The protein belongs to the DnaA family. In terms of assembly, oligomerizes as a right-handed, spiral filament on DNA at oriC.

Its subcellular location is the cytoplasm. Its function is as follows. Plays an essential role in the initiation and regulation of chromosomal replication. ATP-DnaA binds to the origin of replication (oriC) to initiate formation of the DNA replication initiation complex once per cell cycle. Binds the DnaA box (a 9 base pair repeat at the origin) and separates the double-stranded (ds)DNA. Forms a right-handed helical filament on oriC DNA; dsDNA binds to the exterior of the filament while single-stranded (ss)DNA is stabiized in the filament's interior. The ATP-DnaA-oriC complex binds and stabilizes one strand of the AT-rich DNA unwinding element (DUE), permitting loading of DNA polymerase. After initiation quickly degrades to an ADP-DnaA complex that is not apt for DNA replication. Binds acidic phospholipids. The chain is Chromosomal replication initiator protein DnaA from Tropheryma whipplei (strain TW08/27) (Whipple's bacillus).